Consider the following 203-residue polypeptide: Imidazole glycerol phosphate synthase subunit HisH 1 (203 aa).

Positions 1-203 (MIAIIDYNAG…KMIENFVELI (203 aa)) constitute a Glutamine amidotransferase type-1 domain. The active-site Nucleophile is Cys82. Catalysis depends on residues His184 and Glu186.

In terms of assembly, heterodimer of HisH and HisF.

It localises to the cytoplasm. It catalyses the reaction 5-[(5-phospho-1-deoxy-D-ribulos-1-ylimino)methylamino]-1-(5-phospho-beta-D-ribosyl)imidazole-4-carboxamide + L-glutamine = D-erythro-1-(imidazol-4-yl)glycerol 3-phosphate + 5-amino-1-(5-phospho-beta-D-ribosyl)imidazole-4-carboxamide + L-glutamate + H(+). It carries out the reaction L-glutamine + H2O = L-glutamate + NH4(+). The protein operates within amino-acid biosynthesis; L-histidine biosynthesis; L-histidine from 5-phospho-alpha-D-ribose 1-diphosphate: step 5/9. Its function is as follows. IGPS catalyzes the conversion of PRFAR and glutamine to IGP, AICAR and glutamate. The HisH subunit provides the glutamine amidotransferase activity that produces the ammonia necessary to HisF for the synthesis of IGP and AICAR. The protein is Imidazole glycerol phosphate synthase subunit HisH 1 (hisH1) of Methanococcus maripaludis (strain DSM 14266 / JCM 13030 / NBRC 101832 / S2 / LL).